The primary structure comprises 265 residues: Mlc titration factor A (265 aa).

Zn(2+)-binding residues include H111, H148, H152, and E211.

It belongs to the MtfA family. Interacts with Mlc. Zn(2+) serves as cofactor.

It localises to the cytoplasm. In terms of biological role, involved in the modulation of the activity of the glucose-phosphotransferase system (glucose-PTS). Interacts with the transcriptional repressor Mlc, preventing its interaction with DNA and leading to the modulation of expression of genes regulated by Mlc, including ptsG, which encodes the PTS system glucose-specific EIICB component. Shows zinc-dependent metallopeptidase activity. This chain is Mlc titration factor A, found in Escherichia coli (strain UTI89 / UPEC).